The following is a 617-amino-acid chain: MWNDEDNNPYGTSFDRRDSQSSSINPTSPSTREYQRFEPPQTPTSDSDNEHNHGVIHDDSDDDDEDLTQDAGPKRKPGGYDSRIEQILYENPKLSILITDAGKSIESGGRYIVYTIKTGDLEVRRRYSEFASLRDALTRLHPTLIVPPIPEKHTMADYAANPTNAKQDQQIIDLRKRMLAVFLNRCRRMEEIRTDGVWWRFFDPNASWSEVLHSHPVASIPKSILKAPPLNPANPTPAHNYLPIPAASAKLKTVAGTNHDNSSGHIQAGPHAFGRFPPEGHNLGEQELDPYFISYESSIKDLEQLLTGPMEKVNRRTLSHLSSLAADLCELGSVYNAFAVSEQAPSLGPAIERIGQAADLSYIATEELSGSLGASFAEPMREHAQFAGVVRSVLKYRVLKRVQQDLTTEELSKKRALLDQLEQSEAEARRIENYLSSSQQISPPPKRSTSLREPPSHQRRDGSQEDTESIDSDFPGTHGDFSSHTPSASQGLPERSTSVPSHKKMPSGNSITNKIFGPIRHAVQGVVDVDPERTRRDLIGKTRESIGQLEQAQVVSEKDVKEASASVLKDMKRFQKDKEDDLRRYMLAYAQSQIEWAKKSKQQWEEARAEVEKIDES.

The disordered stretch occupies residues 1-83 (MWNDEDNNPY…KRKPGGYDSR (83 aa)). Positions 20-31 (QSSSINPTSPST) are enriched in low complexity. A compositionally biased stretch (basic and acidic residues) spans 48 to 58 (DNEHNHGVIHD). Acidic residues predominate over residues 59–68 (DSDDDDEDLT). The 121-residue stretch at 89 to 209 (YENPKLSILI…RFFDPNASWS (121 aa)) folds into the PX domain. Arg-126, Ser-128, Lys-152, and Arg-175 together coordinate a 1,2-diacyl-sn-glycero-3-phospho-(1D-myo-inositol-3-phosphate). Positions 403 to 440 (QQDLTTEELSKKRALLDQLEQSEAEARRIENYLSSSQQ) form a coiled coil. The disordered stretch occupies residues 434 to 516 (YLSSSQQISP…SGNSITNKIF (83 aa)). A compositionally biased stretch (basic and acidic residues) spans 454-463 (PPSHQRRDGS). The span at 480–500 (DFSSHTPSASQGLPERSTSVP) shows a compositional bias: polar residues.

The protein belongs to the sorting nexin family. As to quaternary structure, forms a complex with SNX4/ATG24 and ATG17.

The protein localises to the endosome membrane. Its subcellular location is the preautophagosomal structure membrane. Functionally, required for cytoplasm to vacuole transport (Cvt), pexophagy and mitophagy. Also involved in endoplasmic reticulum-specific autophagic process and is essential for the survival of cells subjected to severe ER stress. Functions in protein retrieval from the endocytic pathway. Required for proper sorting of the v-SNARE protein SNC1. Autophagy is required for proper vegetative growth, asexual/sexual reproduction, and full virulence. Autophagy is particularly involved in the biosynthesis of deoxynivalenol (DON), an important virulence determinant. The polypeptide is Autophagy-related protein 20 (Gibberella zeae (strain ATCC MYA-4620 / CBS 123657 / FGSC 9075 / NRRL 31084 / PH-1) (Wheat head blight fungus)).